A 130-amino-acid polypeptide reads, in one-letter code: Small ribosomal subunit protein uS8 (130 aa).

Belongs to the universal ribosomal protein uS8 family. Part of the 30S ribosomal subunit. Contacts proteins S5 and S12.

Functionally, one of the primary rRNA binding proteins, it binds directly to 16S rRNA central domain where it helps coordinate assembly of the platform of the 30S subunit. In Marinobacter nauticus (strain ATCC 700491 / DSM 11845 / VT8) (Marinobacter aquaeolei), this protein is Small ribosomal subunit protein uS8.